Here is a 303-residue protein sequence, read N- to C-terminus: Carboxypeptidase B (303 aa).

Residues 5-298 form the Peptidase M14 domain; the sequence is SYHDYDEINA…EGVKVVANFV (294 aa). 2 residues coordinate Zn(2+): His63 and Glu66. Substrate-binding positions include 63–66, Arg118, and 136–137; these read HARE and NR. His189 is a Zn(2+) binding site. Substrate contacts are provided by residues 190 to 191 and Tyr241; that span reads SY. Glu264 functions as the Proton donor/acceptor in the catalytic mechanism.

This sequence belongs to the peptidase M14 family. Zn(2+) serves as cofactor.

It localises to the secreted. It carries out the reaction Preferential release of a C-terminal lysine or arginine amino acid.. This chain is Carboxypeptidase B, found in Astacus astacus (Noble crayfish).